Here is a 244-residue protein sequence, read N- to C-terminus: Cell division protein ZapD (244 aa).

This sequence belongs to the ZapD family. In terms of assembly, interacts with FtsZ.

The protein resides in the cytoplasm. Cell division factor that enhances FtsZ-ring assembly. Directly interacts with FtsZ and promotes bundling of FtsZ protofilaments, with a reduction in FtsZ GTPase activity. In Shewanella sp. (strain MR-7), this protein is Cell division protein ZapD.